The following is a 199-amino-acid chain: Protein-methionine-sulfoxide reductase heme-binding subunit MsrQ (199 aa).

4 helical membrane-spanning segments follow: residues tryptophan 10–isoleucine 30, leucine 82–isoleucine 102, proline 116–threonine 136, and valine 153–serine 173.

It belongs to the MsrQ family. In terms of assembly, heterodimer of a catalytic subunit (MsrP) and a heme-binding subunit (MsrQ). FMN is required as a cofactor. Heme b serves as cofactor.

It localises to the cell inner membrane. Functionally, part of the MsrPQ system that repairs oxidized periplasmic proteins containing methionine sulfoxide residues (Met-O), using respiratory chain electrons. Thus protects these proteins from oxidative-stress damage caused by reactive species of oxygen and chlorine generated by the host defense mechanisms. MsrPQ is essential for the maintenance of envelope integrity under bleach stress, rescuing a wide series of structurally unrelated periplasmic proteins from methionine oxidation, including the primary periplasmic chaperone SurA and the lipoprotein Pal. MsrQ provides electrons for reduction to the reductase catalytic subunit MsrP, using the quinone pool of the respiratory chain. The sequence is that of Protein-methionine-sulfoxide reductase heme-binding subunit MsrQ from Salmonella newport (strain SL254).